We begin with the raw amino-acid sequence, 186 residues long: Putative glutathione-dependent formaldehyde-activating enzyme (186 aa).

The region spanning 20-166 (FSGGKLRCKC…FKSIGLETYD (147 aa)) is the CENP-V/GFA domain. 7 residues coordinate Zn(2+): Cys-27, Cys-29, Cys-48, Cys-50, Cys-53, Cys-95, and Cys-98.

This sequence belongs to the Gfa family. Requires Zn(2+) as cofactor.

The catalysed reaction is S-(hydroxymethyl)glutathione = glutathione + formaldehyde. It participates in one-carbon metabolism; formaldehyde degradation; formate from formaldehyde (glutathione route): step 1/3. Catalyzes the condensation of formaldehyde and glutathione to S-hydroxymethylglutathione. The chain is Putative glutathione-dependent formaldehyde-activating enzyme from Fusarium vanettenii (strain ATCC MYA-4622 / CBS 123669 / FGSC 9596 / NRRL 45880 / 77-13-4) (Fusarium solani subsp. pisi).